The sequence spans 251 residues: Methionine aminopeptidase (251 aa).

Position 76 (His-76) interacts with substrate. A divalent metal cation is bound by residues Asp-93, Asp-104, and His-168. His-175 is a binding site for substrate. A divalent metal cation is bound by residues Glu-202 and Glu-233.

This sequence belongs to the peptidase M24A family. Methionine aminopeptidase type 1 subfamily. As to quaternary structure, monomer. Requires Co(2+) as cofactor. The cofactor is Zn(2+). Mn(2+) serves as cofactor. It depends on Fe(2+) as a cofactor.

It catalyses the reaction Release of N-terminal amino acids, preferentially methionine, from peptides and arylamides.. Its function is as follows. Removes the N-terminal methionine from nascent proteins. The N-terminal methionine is often cleaved when the second residue in the primary sequence is small and uncharged (Met-Ala-, Cys, Gly, Pro, Ser, Thr, or Val). Requires deformylation of the N(alpha)-formylated initiator methionine before it can be hydrolyzed. In Staphylococcus epidermidis (strain ATCC 35984 / DSM 28319 / BCRC 17069 / CCUG 31568 / BM 3577 / RP62A), this protein is Methionine aminopeptidase.